A 452-amino-acid chain; its full sequence is Probable glycine dehydrogenase (decarboxylating) subunit 1 (452 aa).

It belongs to the GcvP family. N-terminal subunit subfamily. As to quaternary structure, the glycine cleavage system is composed of four proteins: P, T, L and H. In this organism, the P 'protein' is a heterodimer of two subunits.

It catalyses the reaction N(6)-[(R)-lipoyl]-L-lysyl-[glycine-cleavage complex H protein] + glycine + H(+) = N(6)-[(R)-S(8)-aminomethyldihydrolipoyl]-L-lysyl-[glycine-cleavage complex H protein] + CO2. The glycine cleavage system catalyzes the degradation of glycine. The P protein binds the alpha-amino group of glycine through its pyridoxal phosphate cofactor; CO(2) is released and the remaining methylamine moiety is then transferred to the lipoamide cofactor of the H protein. The chain is Probable glycine dehydrogenase (decarboxylating) subunit 1 from Sphingopyxis alaskensis (strain DSM 13593 / LMG 18877 / RB2256) (Sphingomonas alaskensis).